A 362-amino-acid polypeptide reads, in one-letter code: Chorismate synthase (362 aa).

Position 46 (Arg46) interacts with NADP(+). FMN is bound by residues 122 to 124 (RSS), 238 to 239 (NA), Gly278, 293 to 297 (KPTPS), and Arg319.

Belongs to the chorismate synthase family. In terms of assembly, homotetramer. It depends on FMNH2 as a cofactor.

It catalyses the reaction 5-O-(1-carboxyvinyl)-3-phosphoshikimate = chorismate + phosphate. The protein operates within metabolic intermediate biosynthesis; chorismate biosynthesis; chorismate from D-erythrose 4-phosphate and phosphoenolpyruvate: step 7/7. Functionally, catalyzes the anti-1,4-elimination of the C-3 phosphate and the C-6 proR hydrogen from 5-enolpyruvylshikimate-3-phosphate (EPSP) to yield chorismate, which is the branch point compound that serves as the starting substrate for the three terminal pathways of aromatic amino acid biosynthesis. This reaction introduces a second double bond into the aromatic ring system. The sequence is that of Chorismate synthase from Campylobacter jejuni subsp. jejuni serotype O:23/36 (strain 81-176).